The following is an 84-amino-acid chain: UPF0298 protein NWMN_0985 (84 aa).

It belongs to the UPF0298 family.

The protein localises to the cytoplasm. In Staphylococcus aureus (strain Newman), this protein is UPF0298 protein NWMN_0985.